Consider the following 302-residue polypeptide: Methionyl-tRNA formyltransferase (302 aa).

108 to 111 (SLLP) serves as a coordination point for (6S)-5,6,7,8-tetrahydrofolate. A compositionally biased stretch (basic and acidic residues) spans 279 to 288 (KRPMEPEEFL). The tract at residues 279 to 302 (KRPMEPEEFLRGFPLPEGSRAHTS) is disordered.

This sequence belongs to the Fmt family.

The enzyme catalyses L-methionyl-tRNA(fMet) + (6R)-10-formyltetrahydrofolate = N-formyl-L-methionyl-tRNA(fMet) + (6S)-5,6,7,8-tetrahydrofolate + H(+). Its function is as follows. Attaches a formyl group to the free amino group of methionyl-tRNA(fMet). The formyl group appears to play a dual role in the initiator identity of N-formylmethionyl-tRNA by promoting its recognition by IF2 and preventing the misappropriation of this tRNA by the elongation apparatus. The polypeptide is Methionyl-tRNA formyltransferase (Cereibacter sphaeroides (strain ATCC 17023 / DSM 158 / JCM 6121 / CCUG 31486 / LMG 2827 / NBRC 12203 / NCIMB 8253 / ATH 2.4.1.) (Rhodobacter sphaeroides)).